Here is a 225-residue protein sequence, read N- to C-terminus: 2-C-methyl-D-erythritol 4-phosphate cytidylyltransferase (225 aa).

The protein belongs to the IspD/TarI cytidylyltransferase family. IspD subfamily.

The catalysed reaction is 2-C-methyl-D-erythritol 4-phosphate + CTP + H(+) = 4-CDP-2-C-methyl-D-erythritol + diphosphate. It functions in the pathway isoprenoid biosynthesis; isopentenyl diphosphate biosynthesis via DXP pathway; isopentenyl diphosphate from 1-deoxy-D-xylulose 5-phosphate: step 2/6. Catalyzes the formation of 4-diphosphocytidyl-2-C-methyl-D-erythritol from CTP and 2-C-methyl-D-erythritol 4-phosphate (MEP). The sequence is that of 2-C-methyl-D-erythritol 4-phosphate cytidylyltransferase from Cereibacter sphaeroides (strain ATCC 17023 / DSM 158 / JCM 6121 / CCUG 31486 / LMG 2827 / NBRC 12203 / NCIMB 8253 / ATH 2.4.1.) (Rhodobacter sphaeroides).